A 659-amino-acid polypeptide reads, in one-letter code: Protein phosphatase Slingshot homolog 3 (659 aa).

The span at 1-16 (MALVTVSRSPPGSGAS) shows a compositional bias: polar residues. Residues 1 to 31 (MALVTVSRSPPGSGASTPVGPWDQAVQRRSR) are disordered. Ala-2 bears the N-acetylalanine mark. Ser-9 and Ser-37 each carry phosphoserine. Positions 46-96 (LGLQDGGDNDDAAEASSEPTEKAPSEEELHGDQTDFGQGSQSPQKQEEQRQ) are disordered. Positions 64–78 (PTEKAPSEEELHGDQ) are enriched in basic and acidic residues. Residues 80 to 89 (DFGQGSQSPQ) show a composition bias toward polar residues. Phosphoserine occurs at positions 85 and 87. Positions 269–324 (EQMEQAIRAELWKVLDVSDLESVTSKEIRQALELRLGLPLQQYRDFIDNQMLLLVA) constitute a DEK-C domain. The Tyrosine-protein phosphatase domain maps to 328–469 (RASRIFPHLY…LQIYQGILTA (142 aa)). Cys-413 (phosphocysteine intermediate) is an active-site residue. 3 disordered regions span residues 482–534 (GVSP…RINL), 547–603 (SLEL…RQSV), and 617–638 (QAFQ…ISST). Residues 547–557 (SLELESTSETS) show a composition bias toward low complexity.

It belongs to the protein-tyrosine phosphatase family. In terms of assembly, does not bind to, or colocalize with, filamentous actin.

Its subcellular location is the cytoplasm. The protein resides in the cytoskeleton. It localises to the nucleus. It catalyses the reaction O-phospho-L-tyrosyl-[protein] + H2O = L-tyrosyl-[protein] + phosphate. The catalysed reaction is O-phospho-L-seryl-[protein] + H2O = L-seryl-[protein] + phosphate. It carries out the reaction O-phospho-L-threonyl-[protein] + H2O = L-threonyl-[protein] + phosphate. Protein phosphatase which may play a role in the regulation of actin filament dynamics. Can dephosphorylate and activate the actin binding/depolymerizing factor cofilin, which subsequently binds to actin filaments and stimulates their disassembly. This chain is Protein phosphatase Slingshot homolog 3 (SSH3), found in Homo sapiens (Human).